A 500-amino-acid polypeptide reads, in one-letter code: NAD(P)H-quinone oxidoreductase chain 4, chloroplastic (500 aa).

A run of 14 helical transmembrane segments spans residues 4–24 (FPWL…IFLF), 31–51 (VIKW…TYAF), 84–104 (GFSL…TLAA), 111–129 (SRLF…IGLF), 134–154 (LLLF…LLSM), 167–187 (FILY…GIAL), 208–228 (ALEI…SPII), 242–262 (HYST…YGLV), 272–292 (AHSI…IYAA), 305–325 (IAYS…SISD), 330–350 (GAIL…FLAG), 386–406 (LALP…GIIT), 416–436 (ILIT…LLSM), and 463–483 (FVSI…DFVF).

This sequence belongs to the complex I subunit 4 family.

Its subcellular location is the plastid. The protein resides in the chloroplast thylakoid membrane. The catalysed reaction is a plastoquinone + NADH + (n+1) H(+)(in) = a plastoquinol + NAD(+) + n H(+)(out). It catalyses the reaction a plastoquinone + NADPH + (n+1) H(+)(in) = a plastoquinol + NADP(+) + n H(+)(out). This Manihot esculenta (Cassava) protein is NAD(P)H-quinone oxidoreductase chain 4, chloroplastic.